The primary structure comprises 194 residues: RNA polymerase II subunit A C-terminal domain phosphatase SSU72 like protein 1 (194 aa).

Belongs to the SSU72 phosphatase family.

Its subcellular location is the nucleus. It carries out the reaction O-phospho-L-seryl-[protein] + H2O = L-seryl-[protein] + phosphate. The catalysed reaction is O-phospho-L-threonyl-[protein] + H2O = L-threonyl-[protein] + phosphate. Protein phosphatase that catalyzes the dephosphorylation of the C-terminal domain of RNA polymerase II. Plays a role in RNA processing and termination. In Homo sapiens (Human), this protein is RNA polymerase II subunit A C-terminal domain phosphatase SSU72 like protein 1.